We begin with the raw amino-acid sequence, 833 residues long: Zinc phosphodiesterase ELAC protein 2 homolog (833 aa).

Residues 1–19 (MLGAIARKTVENRILVSRH) constitute a mitochondrion transit peptide. The segment covering 624–646 (LTPPGSPGGPPGKRPRLPSPHLP) has biased composition (pro residues). The disordered stretch occupies residues 624–652 (LTPPGSPGGPPGKRPRLPSPHLPPSRDVL).

This sequence belongs to the RNase Z family. As to quaternary structure, homodimer. Zn(2+) is required as a cofactor. As to expression, highly expressed in the germline.

Its subcellular location is the mitochondrion. The protein localises to the nucleus. The enzyme catalyses Endonucleolytic cleavage of RNA, removing extra 3' nucleotides from tRNA precursor, generating 3' termini of tRNAs. A 3'-hydroxy group is left at the tRNA terminus and a 5'-phosphoryl group is left at the trailer molecule.. Functionally, zinc phosphodiesterase, which displays some tRNA 3'-processing endonuclease activity. Probably involved in tRNA maturation, by removing a 3'-trailer from precursor tRNA. Involved in germline proliferation. May be required for both mitosis and meiosis in germ cells. Its function is as follows. Does not regulate the mitochondrial unfolded protein response following mitochondrial stress. Plays a role in mitochondrial unfolded protein response. Upon mitochondrial stress is exported from the nucleus where its tRNA endonuclease activity is negatively regulated. In response to mitochondrial stress, might be involved in activating a transcriptional response in an ATFS-1- and DVE-1-dependent manner. May play a role in negatively regulating the mitochondrial membrane potential. This chain is Zinc phosphodiesterase ELAC protein 2 homolog, found in Caenorhabditis elegans.